Here is a 422-residue protein sequence, read N- to C-terminus: C-type lectin domain family 4 member M (422 aa).

The Cytoplasmic segment spans residues 1–49; it reads MSDSKEPRVQPLGLLEEDPTTSGIRLFPRDFQFQQTHGHKSSTGCLGHG. Residues 14 to 15 carry the Endocytosis signal motif; it reads LL. Residues 50 to 70 form a helical; Signal-anchor for type II membrane protein membrane-spanning segment; sequence PLVLQLLSFALLAGVLVAILV. At 71–422 the chain is on the extracellular side; sequence QVYKVPSSLS…KKPIACFRDE (352 aa). N-linked (GlcNAc...) asparagine glycosylation is present at N92. 8 consecutive repeat copies span residues 108-130, 131-151, 154-176, 177-199, 200-222, 223-245, 246-268, and 269-291. The tract at residues 108 to 292 is 8 X approximate tandem repeats; it reads KLQEIYQELT…AFERLCCRCP (185 aa). Cystine bridges form between C288–C418, C291–C302, C319–C412, and C391–C404. The region spanning 297 to 413 is the C-type lectin domain; it reads FFQGNCYFMS…CNVDNYWICK (117 aa). Ca(2+)-binding residues include E382, N384, S386, E389, N400, and D401. N-linked (GlcNAc...) asparagine glycosylation is present at N384.

As to quaternary structure, homotetramer.

The protein localises to the membrane. Its function is as follows. Probable pathogen-recognition receptor involved in peripheral immune surveillance in liver. May mediate the endocytosis of pathogens which are subsequently degraded in lysosomal compartments. Probably recognizes in a calcium-dependent manner high mannose N-linked oligosaccharides in a variety of pathogen antigens. Is a receptor for ICAM3, probably by binding to mannose-like carbohydrates. This chain is C-type lectin domain family 4 member M (CLEC4M), found in Symphalangus syndactylus (Siamang).